The sequence spans 345 residues: KRR1 small subunit processome component homolog (345 aa).

The region spanning 125 to 193 (DIIKIGNLVH…VRDIVLETMN (69 aa)) is the KH domain. The span at 232–245 (NISKRKQPKVKKQK) shows a compositional bias: basic residues. Disordered regions lie at residues 232-260 (NISKRKQPKVKKQKKEYTPFPPSQPESKV) and 273-329 (QEQK…VDVK). The stretch at 270-298 (FLNQEQKQAKRNQERTEKQKEAAKRQDER) forms a coiled coil. Composition is skewed to basic and acidic residues over residues 276-302 (KQAKRNQERTEKQKEAAKRQDERRNKD) and 315-329 (LKKEDGFSSSKVDVK).

This sequence belongs to the KRR1 family. As to quaternary structure, monomer. Component of the ribosomal small subunit (SSU) processome.

It is found in the nucleus. The protein localises to the nucleolus. In terms of biological role, required for 40S ribosome biogenesis. Involved in nucleolar processing of pre-18S ribosomal RNA and ribosome assembly. Binds to RNA. Required for female germline development, cell viability during eye development and for survival of dividing cells and epithelial cells during early wing disk development. The chain is KRR1 small subunit processome component homolog from Drosophila erecta (Fruit fly).